Here is a 288-residue protein sequence, read N- to C-terminus: Bifunctional protein FolD (288 aa).

NADP(+) is bound by residues 166-168 (GAS) and Ile232.

This sequence belongs to the tetrahydrofolate dehydrogenase/cyclohydrolase family. As to quaternary structure, homodimer.

The enzyme catalyses (6R)-5,10-methylene-5,6,7,8-tetrahydrofolate + NADP(+) = (6R)-5,10-methenyltetrahydrofolate + NADPH. It catalyses the reaction (6R)-5,10-methenyltetrahydrofolate + H2O = (6R)-10-formyltetrahydrofolate + H(+). Its pathway is one-carbon metabolism; tetrahydrofolate interconversion. Its function is as follows. Catalyzes the oxidation of 5,10-methylenetetrahydrofolate to 5,10-methenyltetrahydrofolate and then the hydrolysis of 5,10-methenyltetrahydrofolate to 10-formyltetrahydrofolate. This is Bifunctional protein FolD from Salmonella enteritidis PT4 (strain P125109).